Reading from the N-terminus, the 397-residue chain is Elongation factor Tu (397 aa).

Positions 10-206 (KPHVNIGTIG…AVDENVPDPE (197 aa)) constitute a tr-type G domain. The interval 19–26 (GHVDHGKT) is G1. 19 to 26 (GHVDHGKT) is a binding site for GTP. Mg(2+) is bound at residue threonine 26. Positions 62–66 (GITIQ) are G2. The segment at 83–86 (DAPG) is G3. Residues 83–87 (DAPGH) and 138–141 (NKAD) each bind GTP. A G4 region spans residues 138 to 141 (NKAD). The segment at 176 to 178 (SAL) is G5.

The protein belongs to the TRAFAC class translation factor GTPase superfamily. Classic translation factor GTPase family. EF-Tu/EF-1A subfamily. Monomer.

It localises to the cytoplasm. It catalyses the reaction GTP + H2O = GDP + phosphate + H(+). Its function is as follows. GTP hydrolase that promotes the GTP-dependent binding of aminoacyl-tRNA to the A-site of ribosomes during protein biosynthesis. In Saccharopolyspora erythraea (strain ATCC 11635 / DSM 40517 / JCM 4748 / NBRC 13426 / NCIMB 8594 / NRRL 2338), this protein is Elongation factor Tu.